The following is a 440-amino-acid chain: Thymidine phosphorylase (440 aa).

Belongs to the thymidine/pyrimidine-nucleoside phosphorylase family. As to quaternary structure, homodimer.

The catalysed reaction is thymidine + phosphate = 2-deoxy-alpha-D-ribose 1-phosphate + thymine. Its pathway is pyrimidine metabolism; dTMP biosynthesis via salvage pathway; dTMP from thymine: step 1/2. Functionally, the enzymes which catalyze the reversible phosphorolysis of pyrimidine nucleosides are involved in the degradation of these compounds and in their utilization as carbon and energy sources, or in the rescue of pyrimidine bases for nucleotide synthesis. In Salmonella schwarzengrund (strain CVM19633), this protein is Thymidine phosphorylase.